We begin with the raw amino-acid sequence, 888 residues long: MGSGPIDPKELLKGLDSFLTRDGEVKSVDGISKIFSLMKEARKMVSRCTYLNIILQTRAPEVLVKFIDVGGYKLLNNWLTYSKTTNNIPLLQQILLTLQHLPLTVDHLKQNNTAKLVKQLSKSSEDEELRKLASVLVSDWMAVIRSQSSTQPAEKDKKKRKEEGKSRTTLPERPLTEVKAETRAEEAPEKKKEKPKSLRTTAPSHAKFRSTGLELDTPSLVPVKKNSSTVVVSDKYNLKPIPLKRQSATAAPGDAAPPAEKKYKPLNTAPNTTKEIKVKIIPPQPMEGLGFLDALNSAPVPGIKIKKKKKVLSPTAAKPSPFEGKTSTEQSTAKPSSPEPAPPAEPMDTDRPGTPVPPVEVPELMDAASSEPGALDAKPVDSPGDPNQLTRKGRKRKTVTWPEEGKLREYFYFELDETERVNVNKIKDFGEAAKREILSDRHAFETARRLSHDNMEEKVPWVCPRPLVLPSPLVIPGSNSQERYIQAEREKGILQELFLNKESPHEPDPEPYEPIPPKLIPLDEECAMDETPYVETLEPGGSGGSPDGAGGSKLPPVLANLMGSMGAGKSPQGPGGGGINVQEILTSIMGSPNSHPSEELLKQPDYSDKLKQMLVPHGLLGPGPVANGFPPGGPGGPKGMQHFPPGPGGPMPGPHGGPGGPVGPRLLGPPPPSRGGDPFWDGPGDPMRGGPMRGGPGPAPGPYHRGRGGRGGNEPPPPPPFRGARGGRSGGGPPNGRGGPGGGGMVGGGGHRPHEGPGGSMGSGHRSHDGPGGNMGSGHRSHDGPGGNMGGSGGHRSHEGPGHGGPHGHRPHDVPSHRGHDHRGPPPHEHRGHDGHGGGGHRGHDGGHSHGGDMSNRPVCRHFMMKGNCRYENNCAFYHPGVNGPPLP.

Residues 1–348 (MGSGPIDPKE…EPAPPAEPMD (348 aa)) form an interaction with TOX4 region. The TFIIS N-terminal domain maps to 73-147 (KLLNNWLTYS…SDWMAVIRSQ (75 aa)). 4 disordered regions span residues 147–213 (QSST…STGL), 247–270 (SATA…NTAP), 306–400 (KKKK…KTVT), and 534–853 (VETL…HGGD). 2 stretches are compositionally biased toward basic and acidic residues: residues 153-166 (AEKD…EGKS) and 174-196 (PLTE…EKPK). Residue Lys-179 forms a Glycyl lysine isopeptide (Lys-Gly) (interchain with G-Cter in SUMO2) linkage. The segment covering 248 to 258 (ATAAPGDAAPP) has biased composition (low complexity). Lys-262 participates in a covalent cross-link: Glycyl lysine isopeptide (Lys-Gly) (interchain with G-Cter in SUMO2). Ser-313 is subject to Phosphoserine. Positions 325–334 (KTSTEQSTAK) are enriched in polar residues. Residue Ser-382 is modified to Phosphoserine. Residues 388-417 (QLTRKGRKRKTVTWPEEGKLREYFYFELDE) form a necessary for interaction with PPP1CA region. Residues 393–408 (GRKRKTVTWPEEGKLR) form a necessary for interaction with PPP1CC region. A PP1-binding motif motif is present at residues 394-423 (RKRKTVTWPEEGKLREYFYFELDETERVNV). Thr-398 is modified (phosphothreonine). Residues 418–619 (TERVNVNKIK…LKQMLVPHGL (202 aa)) form an interaction with WDR82 region. The segment covering 540–551 (GGSGGSPDGAGG) has biased composition (gly residues). 2 positions are modified to phosphoserine: Ser-545 and Ser-591. Positions 583–595 (EILTSIMGSPNSH) are enriched in polar residues. Residues 596–611 (PSEELLKQPDYSDKLK) show a composition bias toward basic and acidic residues. Pro residues predominate over residues 644–655 (PPGPGGPMPGPH). Arg-665 carries the post-translational modification Omega-N-methylarginine. Low complexity predominate over residues 674 to 690 (RGGDPFWDGPGDPMRGG). Omega-N-methylarginine is present on residues Arg-693 and Arg-737. Composition is skewed to gly residues over residues 724 to 762 (ARGG…GSMG) and 784 to 794 (GPGGNMGGSGG). Residues 811 to 851 (PHDVPSHRGHDHRGPPPHEHRGHDGHGGGGHRGHDGGHSHG) show a composition bias toward basic and acidic residues. Residues 854–882 (MSNRPVCRHFMMKGNCRYENNCAFYHPGV) form a C3H1-type zinc finger.

In terms of assembly, component of the PNUTS-PP1 complex (also named PTW/PP1 complex), composed of PPP1R10/PNUTS, TOX4, WDR82, and PPP1CA (or PPP1CB or PPP1CC). Post-translationally, phosphorylated on Ser-398 by PKA within the region necessary for interaction with PPP1CA.

The protein localises to the nucleus. It localises to the chromosome. Functionally, substrate-recognition component of the PNUTS-PP1 protein phosphatase complex, a protein phosphatase 1 (PP1) complex that promotes RNA polymerase II transcription pause-release, allowing transcription elongation. Promoter-proximal pausing by RNA polymerase II is a transcription halt following transcription initiation but prior to elongation, which acts as a checkpoint to control that transcripts are favorably configured for transcriptional elongation. The PNUTS-PP1 complex mediates the release of RNA polymerase II from promoter-proximal region of genes by catalyzing dephosphorylation of proteins involved in transcription, such as AFF4, CDK9, MEPCE, INTS12, NCBP1, POLR2M/GDOWN1 and SUPT6H. The PNUTS-PP1 complex also regulates RNA polymerase II transcription termination by mediating dephosphorylation of SUPT5H in termination zones downstream of poly(A) sites, thereby promoting deceleration of RNA polymerase II transcription. PNUTS-PP1 complex is also involved in the response to replication stress by mediating dephosphorylation of POLR2A at 'Ser-5' of the CTD, promoting RNA polymerase II degradation. The PNUTS-PP1 complex also plays a role in the control of chromatin structure and cell cycle progression during the transition from mitosis into interphase. PNUTS-PP1 complex mediates dephosphorylation of MYC, promoting MYC stability by preventing MYC ubiquitination by the SCF(FBXW7) complex. In addition to acts as a substrate-recognition component, PPP1R10/PNUTS also acts as a nuclear targeting subunit for the PNUTS-PP1 complex. In some context, PPP1R10/PNUTS also acts as an inhibitor of protein phosphatase 1 (PP1) activity by preventing access to substrates, such as RB. The chain is Serine/threonine-protein phosphatase 1 regulatory subunit 10 from Mus musculus (Mouse).